A 353-amino-acid polypeptide reads, in one-letter code: Guanine nucleotide-binding protein subunit alpha (353 aa).

Positions 1–25 (MGCGMSTEDKEGKARNEEIENQLKR) are disordered. Gly2 is lipidated: N-myristoyl glycine. Residue Cys3 is the site of S-palmitoyl cysteine attachment. The span at 7–25 (TEDKEGKARNEEIENQLKR) shows a compositional bias: basic and acidic residues. Positions 32–353 (NEIKMLLLGA…QENLRLCGLI (322 aa)) constitute a G-alpha domain. Residues 35-48 (KMLLLGAGESGKST) are G1 motif. Residues Glu43, Ser44, Gly45, Lys46, Ser47, Thr48, Asp150, Leu175, Thr181, Gly203, Asn269, Lys270, Asp272, and Ala325 each coordinate GTP. Ser47 contributes to the Mg(2+) binding site. Residues 173–181 (DVLRSRVKT) form a G2 motif region. Thr181 provides a ligand contact to Mg(2+). Positions 196 to 205 (YRMFDVGGQR) are G3 motif. The tract at residues 265 to 272 (ILFLNKID) is G4 motif. Residues 323-328 (TCATDT) are G5 motif.

Belongs to the G-alpha family. G(q) subfamily. In terms of assembly, g proteins are composed of 3 units; alpha, beta and gamma. The alpha chain contains the guanine nucleotide binding site. The cofactor is Mg(2+).

Guanine nucleotide-binding proteins (G proteins) are involved as modulators or transducers in various transmembrane signaling systems. The sequence is that of Guanine nucleotide-binding protein subunit alpha (fadA) from Emericella nidulans (strain FGSC A4 / ATCC 38163 / CBS 112.46 / NRRL 194 / M139) (Aspergillus nidulans).